A 392-amino-acid chain; its full sequence is WD repeat-containing protein GTS1 (392 aa).

WD repeat units lie at residues 81–124 (GHSD…QVSR), 128–167 (GNDQEIFSFSYGGAADNLLAGGCKEQVLLWDWRNSKQVAC), 171–211 (SHMD…NDDD), and 323–368 (GHID…TEIN).

As to expression, expressed in germinating seeds, rosettes leaves, flowers and siliques.

Involved in the control of plant growth development. Acts as negative regulator of seed germination, cell division in meristematic regions, plant growth and overall biomass accumulation. May function by regulating ribosome activities and biogenesis in plant cells. This is WD repeat-containing protein GTS1 from Arabidopsis thaliana (Mouse-ear cress).